A 965-amino-acid chain; its full sequence is Phosphoenolpyruvate carboxylase 1 (965 aa).

S11 is subject to Phosphoserine. The active site involves H172. D-glucose 6-phosphate-binding residues include W283, R450, and D597. K600 is an active-site residue. D-glucose 6-phosphate is bound at residue R635. R641 is a catalytic residue. Position 641 (R641) interacts with L-aspartate. T665 is a binding site for D-glucose 6-phosphate. L-aspartate is bound at residue Q673. D-glucose 6-phosphate-binding positions include R753 and 767-769; that span reads RAI. Positions 829, 888, and 963 each coordinate L-aspartate.

It belongs to the PEPCase type 1 family. In terms of assembly, homotetramer. Requires Mg(2+) as cofactor. In terms of tissue distribution, expressed in roots and stems and at low levels in leaves. Preferentially expressed in the phloem and in root tips.

It is found in the cytoplasm. It catalyses the reaction oxaloacetate + phosphate = phosphoenolpyruvate + hydrogencarbonate. Its activity is regulated as follows. Activated by the allosteric regulator glucose-6-phosphate. Inhibited by malate and aspartate. Up regulated by light-reversible phosphorylation. Functionally, through the carboxylation of phosphoenolpyruvate (PEP) it forms oxaloacetate, a four-carbon dicarboxylic acid source for the tricarboxylic acid cycle. May be involved in phloem loading with sucrose and in anions and cations uptake and amino acid biosynthesis in roots. This is Phosphoenolpyruvate carboxylase 1 from Flaveria trinervia (Clustered yellowtops).